The primary structure comprises 131 residues: Small ribosomal subunit protein uS8 (131 aa).

This sequence belongs to the universal ribosomal protein uS8 family. Part of the 30S ribosomal subunit. Contacts proteins S5 and S12.

In terms of biological role, one of the primary rRNA binding proteins, it binds directly to 16S rRNA central domain where it helps coordinate assembly of the platform of the 30S subunit. This chain is Small ribosomal subunit protein uS8, found in Leptothrix cholodnii (strain ATCC 51168 / LMG 8142 / SP-6) (Leptothrix discophora (strain SP-6)).